Reading from the N-terminus, the 209-residue chain is MKRLVTGLLALSLFLAACGQDSDQQKDGNKEKDDKAKTEQQDKKTNDSSKDKKDNKDDSKDVNKDNKDNSANDNQQQSNSNATNNDQNQTNNNQSSNNQANNNQKSSYVAPYYGQNAAPVARQIYPFNGNKNQALQQLPNFQTALNAANNEANKFGSNNKVYNDYSIEEHNGNYKYVFSFKDPNANGKYSIVTVDYTGQAMVTDPNYQQ.

A signal peptide spans 1–17; that stretch reads MKRLVTGLLALSLFLAA. The disordered stretch occupies residues 17 to 105; sequence ACGQDSDQQK…SNNQANNNQK (89 aa). Cysteine 18 carries the N-palmitoyl cysteine lipid modification. Residue cysteine 18 is the site of S-diacylglycerol cysteine attachment. Over residues 23–70 the composition is skewed to basic and acidic residues; it reads DQQKDGNKEKDDKAKTEQQDKKTNDSSKDKKDNKDDSKDVNKDNKDNS. Low complexity predominate over residues 71–105; sequence ANDNQQQSNSNATNNDQNQTNNNQSSNNQANNNQK.

The protein resides in the cell membrane. This is an uncharacterized protein from Staphylococcus aureus (strain COL).